A 242-amino-acid chain; its full sequence is Probable transcriptional regulatory protein Bamb_2332 (242 aa).

The protein belongs to the TACO1 family.

The protein resides in the cytoplasm. The polypeptide is Probable transcriptional regulatory protein Bamb_2332 (Burkholderia ambifaria (strain ATCC BAA-244 / DSM 16087 / CCUG 44356 / LMG 19182 / AMMD) (Burkholderia cepacia (strain AMMD))).